The sequence spans 199 residues: ATP-dependent Clp protease proteolytic subunit (199 aa).

Catalysis depends on serine 97, which acts as the Nucleophile. Residue histidine 122 is part of the active site.

This sequence belongs to the peptidase S14 family. In terms of assembly, fourteen ClpP subunits assemble into 2 heptameric rings which stack back to back to give a disk-like structure with a central cavity, resembling the structure of eukaryotic proteasomes.

Its subcellular location is the cytoplasm. It carries out the reaction Hydrolysis of proteins to small peptides in the presence of ATP and magnesium. alpha-casein is the usual test substrate. In the absence of ATP, only oligopeptides shorter than five residues are hydrolyzed (such as succinyl-Leu-Tyr-|-NHMec, and Leu-Tyr-Leu-|-Tyr-Trp, in which cleavage of the -Tyr-|-Leu- and -Tyr-|-Trp bonds also occurs).. Its function is as follows. Cleaves peptides in various proteins in a process that requires ATP hydrolysis. Has a chymotrypsin-like activity. Plays a major role in the degradation of misfolded proteins. This Geotalea uraniireducens (strain Rf4) (Geobacter uraniireducens) protein is ATP-dependent Clp protease proteolytic subunit.